The primary structure comprises 78 residues: uncharacterized protein (78 aa).

This is an uncharacterized protein from Ureaplasma parvum serovar 3 (strain ATCC 700970).